A 61-amino-acid polypeptide reads, in one-letter code: Large ribosomal subunit protein bL32 (61 aa).

This sequence belongs to the bacterial ribosomal protein bL32 family.

This Hyphomonas neptunium (strain ATCC 15444) protein is Large ribosomal subunit protein bL32.